The sequence spans 113 residues: Gonadotropin subunit beta (113 aa).

Disulfide bonds link C6/C54, C20/C69, C23/C107, C31/C85, C35/C87, and C90/C97. N10 carries an N-linked (GlcNAc...) asparagine glycan.

This sequence belongs to the glycoprotein hormones subunit beta family. In terms of assembly, heterodimer of an alpha and a beta chain.

The protein resides in the secreted. Its function is as follows. Involved in gametogenesis and steroidogenesis. This Muraenesox cinereus (Daggertooth pike conger) protein is Gonadotropin subunit beta (cgb).